A 107-amino-acid polypeptide reads, in one-letter code: MQFSTTPTLEGQVIVEYCGVVTGEAILGANIFRDFFAGIRDIVGGRSGAYEKELRKAREIAFRELGDQAASLGADAVVGIDIDYETVGKDGSMLMVSVSGTAVKTRR.

This sequence belongs to the UPF0145 family.

The chain is UPF0145 protein ESA_02470 from Cronobacter sakazakii (strain ATCC BAA-894) (Enterobacter sakazakii).